A 422-amino-acid chain; its full sequence is MGTRPCAGVASAVAAAVAVLLLAVSCFAAAATTTQKHGRMSGKGGDVLEDDPTGKLKVFVYEMPRKYNLNLLAKDSRCLQHMFAAEIFMHQFLLSSPVRTLDPEEADWFYTPAYTTCDLTPQGFPLPFRAPRIMRSAVRYVAATWPYWNRTDGADHFFLAPHDFGACFHYQEERAIERGILPVLRRATLVQTFGQRHHPCLQPGSITVPPYADPRKMEAHRISPATPRSIFVYFRGLFYDMGNDPEGGYYARGARASVWENFKDNPLFDISTEHPATYYEDMQRAIFCLCPLGWAPWSPRLVEAVVFGCIPVIIADDIVLPFADAIPWGEISVFVAEEDVPRLDTILASVPLDEVIRKQRLLASPAMKQAVLFHQPARPGDAFHQILNGLARKLPHPKGVFLEPGEKGIDWDQGLENDLKPW.

The Cytoplasmic segment spans residues 1 to 8; that stretch reads MGTRPCAG. The chain crosses the membrane as a helical; Signal-anchor for type II membrane protein span at residues 9 to 29; the sequence is VASAVAAAVAVLLLAVSCFAA. Residues 30 to 422 lie on the Lumenal side of the membrane; that stretch reads AATTTQKHGR…QGLENDLKPW (393 aa). Asn-149 is a glycosylation site (N-linked (GlcNAc...) asparagine).

The protein belongs to the glycosyltransferase 47 family.

Its subcellular location is the golgi apparatus membrane. Functionally, involved in the synthesis of glucuronoxylan hemicellulose in secondary cell walls. The chain is Probable glucuronosyltransferase Os01g0926400 from Oryza sativa subsp. japonica (Rice).